The following is a 200-amino-acid chain: Dephospho-CoA kinase (200 aa).

Positions 3-200 (IIGLTGGIGS…LWQRFATQVE (198 aa)) constitute a DPCK domain. 11–16 (GSGKST) contributes to the ATP binding site.

The protein belongs to the CoaE family.

The protein localises to the cytoplasm. The catalysed reaction is 3'-dephospho-CoA + ATP = ADP + CoA + H(+). It participates in cofactor biosynthesis; coenzyme A biosynthesis; CoA from (R)-pantothenate: step 5/5. Catalyzes the phosphorylation of the 3'-hydroxyl group of dephosphocoenzyme A to form coenzyme A. This chain is Dephospho-CoA kinase, found in Corynebacterium diphtheriae (strain ATCC 700971 / NCTC 13129 / Biotype gravis).